Reading from the N-terminus, the 466-residue chain is Na(+)/H(+) antiporter NhaA (466 aa).

Helical transmembrane passes span 32 to 52 (VGGV…NVPA), 74 to 94 (LSVQ…VAGI), 111 to 131 (AALP…VYTL), 142 to 162 (GWAV…AVIG), 172 to 192 (FLLT…AVFF), 195 to 215 (DLNF…WLLL), 221 to 241 (GWYV…NSGI), 280 to 300 (GLAV…GGAL), 310 to 330 (LGVV…GTWL), 348 to 368 (VFAV…IGEL), and 379 to 399 (EVKA…TTLL).

The protein belongs to the NhaA Na(+)/H(+) (TC 2.A.33) antiporter family.

It is found in the cell membrane. The catalysed reaction is Na(+)(in) + 2 H(+)(out) = Na(+)(out) + 2 H(+)(in). In terms of biological role, na(+)/H(+) antiporter that extrudes sodium in exchange for external protons. The chain is Na(+)/H(+) antiporter NhaA from Streptomyces avermitilis (strain ATCC 31267 / DSM 46492 / JCM 5070 / NBRC 14893 / NCIMB 12804 / NRRL 8165 / MA-4680).